We begin with the raw amino-acid sequence, 75 residues long: MKLSCLLLTLAIIFVLTIVHAPNVEAKALADPESDAVGFADAVGEADPIDWKKVDWKKVSKKTCKVMLKACKFLG.

A signal peptide spans 1–26 (MKLSCLLLTLAIIFVLTIVHAPNVEA). Positions 27–48 (KALADPESDAVGFADAVGEADP) are excised as a propeptide. Leu-74 bears the Leucine amide mark.

The protein belongs to the formicidae venom precursor-01 superfamily. Ant pilosulin family. In terms of assembly, heterodimer with M-MIITX-Mp2b (pilosin-3b) (AC P0C023); disulfide-linked. Only heterodimers (and not monomers) have been identified in the venom. In terms of tissue distribution, expressed by the venom gland.

It is found in the secreted. Functionally, heterodimer protein that may serve both defensive (pain-inducing) and predatory (insecticidal) roles. Has membrane-disrupting activity and shows induction of non-specific calcium influx into cells,. Shows broad-spectrum activity against a diverse range of bacteria, and cell lines, as well as hemolytic activity (EC(50)=2.18 uM). In vivo, shows moderate insecticidal activity against D.melanogaster and potent anthelmintic activity against the veterinary nematode H.contortus. In addition, intraplantar injection into mice induces nocifensive behavior and mechanical allodynia. The sequence is that of M-myrmeciitoxin-Mp2a from Myrmecia pilosula (Jack jumper ant).